The chain runs to 147 residues: Ribonuclease 4 (147 aa).

Residues 1–28 (MALQRTQAFLLLLLLTLLGLGLVQPSYG) form the signal peptide. Glutamine 29 bears the Pyrrolidone carboxylic acid mark. Positions 35, 40, 68, 71, and 72 each coordinate dUMP. Histidine 40 functions as the Proton acceptor in the catalytic mechanism. Disulfide bonds link cysteine 53–cysteine 109, cysteine 67–cysteine 120, cysteine 85–cysteine 135, and cysteine 92–cysteine 99. The active-site Proton donor is the histidine 144. Phenylalanine 145 provides a ligand contact to dUMP.

It belongs to the pancreatic ribonuclease family.

Its subcellular location is the secreted. Cleaves preferentially after uridine bases. Has antimicrobial activity against uropathogenic E.coli (UPEC). Probably contributes to urinary tract sterility. The polypeptide is Ribonuclease 4 (RNASE4) (Bos taurus (Bovine)).